The chain runs to 33 residues: Brevinin-2DYb (33 aa).

Cysteine 27 and cysteine 33 are joined by a disulfide.

Expressed by the skin glands.

It is found in the secreted. In terms of biological role, antimicrobial peptide. Active against the Gram-positive bacterium S.aureus (MIC=30 uM) and the Gram-negative bacterium E.coli (MIC=30 uM). This Rana dybowskii (Dybovsky's frog) protein is Brevinin-2DYb.